The chain runs to 138 residues: ATP synthase epsilon chain (138 aa).

It belongs to the ATPase epsilon chain family. In terms of assembly, F-type ATPases have 2 components, CF(1) - the catalytic core - and CF(0) - the membrane proton channel. CF(1) has five subunits: alpha(3), beta(3), gamma(1), delta(1), epsilon(1). CF(0) has three main subunits: a, b and c.

It localises to the cell inner membrane. Produces ATP from ADP in the presence of a proton gradient across the membrane. This chain is ATP synthase epsilon chain, found in Polaromonas sp. (strain JS666 / ATCC BAA-500).